Consider the following 772-residue polypeptide: Semaphorin-3A (772 aa).

Positions 1-20 (MGWFTGIACLFWGILLTARA) are cleaved as a signal peptide. The region spanning 31 to 514 (RLKLSYKEML…STAGVAQLPL (484 aa)) is the Sema domain. Asn53 carries an N-linked (GlcNAc...) asparagine glycan. Cysteines 103 and 114 form a disulfide. Asn125 is a glycosylation site (N-linked (GlcNAc...) asparagine). Disulfide bonds link Cys132–Cys141, Cys269–Cys381, Cys293–Cys341, and Cys517–Cys535. The Ig-like C2-type domain occupies 577–665 (HGHSLEERII…GFMQTLLKVT (89 aa)). Asn591 carries N-linked (GlcNAc...) asparagine glycosylation. Cys650 and Cys723 are joined by a disulfide. Basic and acidic residues predominate over residues 677–691 (LLHKDDDGDGSKTKE). 2 disordered regions span residues 677-698 (LLHKDDDGDGSKTKEMSSSMTP) and 729-772 (RDRK…PRSV). The span at 729-738 (RDRKQRRQRP) shows a compositional bias: basic residues. Residues 750–772 (HMQESKKGRNRRTHEFERAPRSV) show a composition bias toward basic and acidic residues.

Belongs to the semaphorin family. As to quaternary structure, interacts with PLXND1. As to expression, expressed in the dorsal root ganglia.

Its subcellular location is the secreted. In terms of biological role, may be involved in guiding growing axons towards their targets by forming a molecular boundary that instructs axons to engage in the formation of specific nerve tracts. Binds to neuropilin. Involved in the development of the olfactory system and in neuronal control of puberty. The sequence is that of Semaphorin-3A (Sema3a) from Rattus norvegicus (Rat).